Here is a 38-residue protein sequence, read N- to C-terminus: Toxin Bcg III 31.16 (38 aa).

3 cysteine pairs are disulfide-bonded: C4–C37, C6–C30, and C20–C38.

Belongs to the sea anemone type 3 (BDS) potassium channel toxin family.

It is found in the secreted. It localises to the nematocyst. In terms of biological role, possible modulator of crustacean voltage-gated sodium channels (Nav). The polypeptide is Toxin Bcg III 31.16 (Bunodosoma cangicum (Sea anemone)).